Reading from the N-terminus, the 667-residue chain is Probable endo-1,3(4)-beta-glucanase AFLA_105200 (667 aa).

The signal sequence occupies residues 1–24 (MSSSSFVWTVGSIALSSLITPTIA). The GH16 domain maps to 25 to 288 (DGSGSRYQLT…WAGGVFGDSG (264 aa)). N63 carries an N-linked (GlcNAc...) asparagine glycan. E144 acts as the Nucleophile in catalysis. The Proton donor role is filled by E149. Composition is skewed to polar residues over residues 354–363 (VPSVTSTPIL) and 379–394 (ATSSAVPEPANPQTSV). Disordered regions lie at residues 354-427 (VPSV…ADAV) and 448-646 (GTIQ…AGAS). Low complexity-rich tracts occupy residues 395 to 427 (AGAETTAAPAPSPETTAAPASPSSDDSEGADAV), 448 to 483 (GTIQTIGGGETEVSPASSTVESAATPAAPTPTSQEP), and 574 to 622 (APTS…EATA). A compositionally biased stretch (polar residues) spans 623 to 637 (PTETDSGASTGTNPE). G644 carries the GPI-anchor amidated glycine lipid modification. Residues 645-667 (ASKSVGISGLAGIVCGIAMAMLA) constitute a propeptide, removed in mature form.

It belongs to the glycosyl hydrolase 16 family.

The protein localises to the cell membrane. It catalyses the reaction Endohydrolysis of (1-&gt;3)- or (1-&gt;4)-linkages in beta-D-glucans when the glucose residue whose reducing group is involved in the linkage to be hydrolyzed is itself substituted at C-3.. Functionally, mixed-linked glucanase involved in the degradation of complex natural cellulosic substrates. The sequence is that of Probable endo-1,3(4)-beta-glucanase AFLA_105200 from Aspergillus flavus (strain ATCC 200026 / FGSC A1120 / IAM 13836 / NRRL 3357 / JCM 12722 / SRRC 167).